Reading from the N-terminus, the 147-residue chain is Hemoglobin subunit epsilon (147 aa).

Positions 3 to 147 (HFTAEEKATI…VATALAHKYH (145 aa)) constitute a Globin domain. 2 positions are modified to phosphoserine: Ser-14 and Ser-51. Heme b is bound by residues His-64 and His-93.

This sequence belongs to the globin family. As to quaternary structure, heterotetramer of two alpha chains and two epsilon chains in early embryonic hemoglobin Gower-2; two zeta chains and two epsilon chains in early embryonic hemoglobin Gower-1. In terms of tissue distribution, red blood cells.

Its function is as follows. The epsilon chain is a beta-type chain of early mammalian embryonic hemoglobin. The chain is Hemoglobin subunit epsilon (HBE1) from Daubentonia madagascariensis (Aye-aye).